A 301-amino-acid polypeptide reads, in one-letter code: Acetyl-coenzyme A carboxylase carboxyl transferase subunit beta (301 aa).

In terms of domain architecture, CoA carboxyltransferase N-terminal spans 25–294 (LWIKCPETGE…SAANDMNGGA (270 aa)).

This sequence belongs to the AccD/PCCB family. In terms of assembly, acetyl-CoA carboxylase is a heterohexamer composed of biotin carboxyl carrier protein (AccB), biotin carboxylase (AccC) and two subunits each of ACCase subunit alpha (AccA) and ACCase subunit beta (AccD).

It is found in the cytoplasm. It carries out the reaction N(6)-carboxybiotinyl-L-lysyl-[protein] + acetyl-CoA = N(6)-biotinyl-L-lysyl-[protein] + malonyl-CoA. Its pathway is lipid metabolism; malonyl-CoA biosynthesis; malonyl-CoA from acetyl-CoA: step 1/1. Its function is as follows. Component of the acetyl coenzyme A carboxylase (ACC) complex. Biotin carboxylase (BC) catalyzes the carboxylation of biotin on its carrier protein (BCCP) and then the CO(2) group is transferred by the transcarboxylase to acetyl-CoA to form malonyl-CoA. The protein is Acetyl-coenzyme A carboxylase carboxyl transferase subunit beta of Rhizobium etli (strain CIAT 652).